Reading from the N-terminus, the 90-residue chain is Protein PRAC2 (90 aa).

In terms of tissue distribution, highly expressed in prostate and testis. Also detected in placenta, muscle, colon, peripheral blood leukocytes and skin.

The protein resides in the nucleus. The protein is Protein PRAC2 of Homo sapiens (Human).